The primary structure comprises 329 residues: Acetyl-coenzyme A carboxylase carboxyl transferase subunit alpha (329 aa).

The CoA carboxyltransferase C-terminal domain occupies 40-294; that stretch reads QLESLAARRR…RAALERHLGE (255 aa).

The protein belongs to the AccA family. As to quaternary structure, acetyl-CoA carboxylase is a heterohexamer composed of biotin carboxyl carrier protein (AccB), biotin carboxylase (AccC) and two subunits each of ACCase subunit alpha (AccA) and ACCase subunit beta (AccD).

Its subcellular location is the cytoplasm. It carries out the reaction N(6)-carboxybiotinyl-L-lysyl-[protein] + acetyl-CoA = N(6)-biotinyl-L-lysyl-[protein] + malonyl-CoA. The protein operates within lipid metabolism; malonyl-CoA biosynthesis; malonyl-CoA from acetyl-CoA: step 1/1. In terms of biological role, component of the acetyl coenzyme A carboxylase (ACC) complex. First, biotin carboxylase catalyzes the carboxylation of biotin on its carrier protein (BCCP) and then the CO(2) group is transferred by the carboxyltransferase to acetyl-CoA to form malonyl-CoA. In Parasynechococcus marenigrum (strain WH8102), this protein is Acetyl-coenzyme A carboxylase carboxyl transferase subunit alpha.